The following is a 137-amino-acid chain: ATP synthase epsilon chain (137 aa).

It belongs to the ATPase epsilon chain family. F-type ATPases have 2 components, CF(1) - the catalytic core - and CF(0) - the membrane proton channel. CF(1) has five subunits: alpha(3), beta(3), gamma(1), delta(1), epsilon(1). CF(0) has three main subunits: a, b and c.

The protein resides in the cell membrane. In terms of biological role, produces ATP from ADP in the presence of a proton gradient across the membrane. This is ATP synthase epsilon chain from Mycoplasmopsis synoviae (strain 53) (Mycoplasma synoviae).